A 422-amino-acid polypeptide reads, in one-letter code: MIDLETIGRRAKTAARTLAKVSTEQKNAALHAIADGLLARQDEILSANAADVADAERAGTPPAIVDRMLLTEARLATIANDCRKVAELPDPVGEIFDRRELPSGLRLYKRRVPIGVIGAIYEARPNVTVDIAALCLKAGNAVILRGGSDIARSVAATTTVIAEALEQAGLPIFAVQSITDPDRELVRQLLRLDRYVDMIIPRGGASLHRFCVENATVPVIVGGMGVSHIYVEPSADFARAVPVVVNAKVQRPGACNALDTLLVHRAAAPVFLPMVAAALAEYNVELRCDLETLAILADAPGHENWQLRPAEPADFGREFLALIVAIKVVGDIDEALDHIAQYGGHSEAILTGDPASAARFTREVDATAVFVNASTRFNDGGQFGLGAEVAISTNRLHARGPMGLQELTTYTWIGEGDYLVRA.

The protein belongs to the gamma-glutamyl phosphate reductase family.

The protein resides in the cytoplasm. It catalyses the reaction L-glutamate 5-semialdehyde + phosphate + NADP(+) = L-glutamyl 5-phosphate + NADPH + H(+). Its pathway is amino-acid biosynthesis; L-proline biosynthesis; L-glutamate 5-semialdehyde from L-glutamate: step 2/2. Functionally, catalyzes the NADPH-dependent reduction of L-glutamate 5-phosphate into L-glutamate 5-semialdehyde and phosphate. The product spontaneously undergoes cyclization to form 1-pyrroline-5-carboxylate. This is Gamma-glutamyl phosphate reductase from Chloroflexus aggregans (strain MD-66 / DSM 9485).